Reading from the N-terminus, the 956-residue chain is Transient receptor potential channel pyrexia (956 aa).

At 1-491 (MENVRFSIIE…LFLKWRRIRK (491 aa)) the chain is on the cytoplasmic side. ANK repeat units follow at residues 132–161 (RGRT…DPNR), 166–195 (KEVT…SINI), 198–227 (EKRS…DPNT), 231–260 (YTET…DVRS), 265–294 (GKVT…EVDC), 298–327 (SHQT…NVNA), 331–362 (DGRT…DVNK), and 366–395 (YGYT…DITA). Residues 492–512 (FFLMSLAYHTLFVILFTFYVI) traverse the membrane as a helical segment. Residues 513–525 (WVYVRCCKKEELC) are Extracellular-facing. The chain crosses the membrane as a helical span at residues 526–546 (VAPGYVSTIGYLVIILNLILL). Over 547–565 (GKEVFQMAHGLRGYAKYWE) the chain is Cytoplasmic. Residues 566 to 584 (NWLQWTIGTGVLLCVTPET) form a helical membrane-spanning segment. The Extracellular portion of the chain corresponds to 585-601 (VRTDDLTAVPVWQHHVA). The helical transmembrane segment at 602 to 622 (AIVILLVWLELMMLVGRFPIF) threads the bilayer. Over 623-638 (GVYVQMFTKVAVNFAK) the chain is Cytoplasmic. Residues 639–659 (FLLAYICLLVAFGLSFAVLFN) form a helical membrane-spanning segment. Residues 660–701 (DYPAFENITWSFLKSITMMSGELEFEDIFYGDYAVKFPVTAH) are Extracellular-facing. N-linked (GlcNAc...) asparagine glycosylation is present at Asn666. A helical membrane pass occupies residues 702–722 (IIFLSFVLLVTVILTNLMVGL). The Cytoplasmic segment spans residues 723–956 (AVSDIQGLQV…VASSHIRRHR (234 aa)).

Belongs to the transient receptor (TC 1.A.4) family. STrpC subfamily. As to quaternary structure, homooligomer; between isoform A and isoform B. As to expression, expressed in various peripheral nerves and the central nerves in embryos. In adults, it is expressed in sensory neurons lying beneath the bristles around eyes, neurons innervating the bristles on the back of thorax and neurons in maxillary palps, proboscis and antennae. Expressed in multidendritic neurons, which mediate temperature sensing, as well as non-multidendritic neurons in larval epidermis. Localizes ubiquitously throughout neurites.

The protein resides in the membrane. Functionally, receptor-activated non-selective cation channel involved in protection or tolerance from high temperature stress. Activated by temperatures above 40 degrees Celsius. More permeable to K(+) than to Na(+). May act in stress protection allow flies to survive in natural environments. The sequence is that of Transient receptor potential channel pyrexia (pyx) from Drosophila melanogaster (Fruit fly).